We begin with the raw amino-acid sequence, 95 residues long: Exodeoxyribonuclease 7 small subunit (95 aa).

The span at 62–83 shows a compositional bias: basic and acidic residues; sequence LTKDESKKTNKTGFRGESKTTE. A disordered region spans residues 62–95; the sequence is LTKDESKKTNKTGFRGESKTTETKNNTAQEEDLF.

It belongs to the XseB family. As to quaternary structure, heterooligomer composed of large and small subunits.

The protein localises to the cytoplasm. The enzyme catalyses Exonucleolytic cleavage in either 5'- to 3'- or 3'- to 5'-direction to yield nucleoside 5'-phosphates.. Its function is as follows. Bidirectionally degrades single-stranded DNA into large acid-insoluble oligonucleotides, which are then degraded further into small acid-soluble oligonucleotides. This Leptospira interrogans serogroup Icterohaemorrhagiae serovar copenhageni (strain Fiocruz L1-130) protein is Exodeoxyribonuclease 7 small subunit.